Here is a 107-residue protein sequence, read N- to C-terminus: Large ribosomal subunit protein uL24 (107 aa).

This sequence belongs to the universal ribosomal protein uL24 family. Part of the 50S ribosomal subunit.

Functionally, one of two assembly initiator proteins, it binds directly to the 5'-end of the 23S rRNA, where it nucleates assembly of the 50S subunit. Its function is as follows. One of the proteins that surrounds the polypeptide exit tunnel on the outside of the subunit. This Gluconacetobacter diazotrophicus (strain ATCC 49037 / DSM 5601 / CCUG 37298 / CIP 103539 / LMG 7603 / PAl5) protein is Large ribosomal subunit protein uL24.